Consider the following 739-residue polypeptide: MASILLRSCRGRAPARLPPPPRYTVPRGSPGDPAHLSCASTLGLRNCLNVPFGCCTPIHPVYTSSRGDHLGCWALRPECLRIVSRAPWTSTSVGFVAVGPQCLPVRGWHSSRPVRDDSVVEKSLKSLKDKNKKLEEGGPVYSPPAEVVVKKSLGQRVLDELKHYYHGFRLLWIDTKIAARMLWRILNGHSLTRRERRQFLRICADLFRLVPFLVFVVVPFMEFLLPVAVKLFPNMLPSTFETQSLKEERLKKELRVKLELAKFLQDTIEEMALKNKAAKGSATKDFSVFFQKIRETGERPSNEEIMRFSKLFEDELTLDNLTRPQLVALCKLLELQSIGTNNFLRFQLTMRLRSIKADDKLIAEEGVDSLNVKELQAACRARGMRALGVTEDRLRGQLKQWLDLHLHQEIPTSLLILSRAMYLPDTLSPADQLKSTLQTLPEIVAKEAQVKVAEVEGEQVDNKAKLEATLQEEAAIQQEHREKELQKRSEVAKDFEPERVVAAPQRPGTEPQPEMPDTVLQSETLKDTAPVLEGLKEEEITKEEIDILSDACSKLQEQKKSLTKEKEELELLKEDVQDYSEDLQEIKKELSKTGEEKYVEESKASKRLTKRVQQMIGQIDGLISQLEMDQQAGKLAPANGMPTGENVISVAELINAMKQVKHIPESKLTSLAAALDENKDGKVNIDDLVKVIELVDKEDVHISTSQVAEIVATLEKEEKVEEKEKAKEKAEKEVAEVKS.

The N-terminal 115 residues, 1-115 (MASILLRSCR…RGWHSSRPVR (115 aa)), are a transit peptide targeting the mitochondrion. Positions 115 to 136 (RDDSVVEKSLKSLKDKNKKLEE) form a coiled coil. Residues 116–208 (DDSVVEKSLK…FLRICADLFR (93 aa)) lie on the Mitochondrial intermembrane side of the membrane. Thr-192 is modified (phosphothreonine; by PINK1). Residues 209–229 (LVPFLVFVVVPFMEFLLPVAV) form a helical membrane-spanning segment. Residues 230–739 (KLFPNMLPST…AEKEVAEVKS (510 aa)) lie on the Mitochondrial matrix side of the membrane. Residues 252 to 537 (KELRVKLELA…TAPVLEGLKE (286 aa)) enclose the Letm1 RBD domain. Coiled coils occupy residues 462-490 (NKAK…KRSE) and 537-627 (EEEI…SQLE). Position 597 is an N6-acetyllysine (Lys-597). Positions 663-698 (IPESKLTSLAAALDENKDGKVNIDDLVKVIELVDKE) constitute an EF-hand domain. Residues Asp-676, Asn-678, Asp-680, Lys-682, and Asp-687 each coordinate Ca(2+). The stretch at 708-739 (AEIVATLEKEEKVEEKEKAKEKAEKEVAEVKS) forms a coiled coil. Residues 718–739 (EKVEEKEKAKEKAEKEVAEVKS) form a disordered region.

It belongs to the LETM1 family. As to quaternary structure, homohexamer. Can form 2 complexes: a major (300 kDa) and a minor complex (500-600 kDa). Interacts with BCS1L. Interacts with GHITM. PINK1-mediated phosphorylation at Thr-192, positively regulates its mitochondrial calcium transport activity.

It localises to the mitochondrion inner membrane. The enzyme catalyses Ca(2+)(in) + 2 H(+)(out) = Ca(2+)(out) + 2 H(+)(in). The catalysed reaction is K(+)(in) + H(+)(out) = K(+)(out) + H(+)(in). Its activity is regulated as follows. Inhibited by ruthenium red or its derivative Ru360. Functionally, plays an important role in maintenance of mitochondrial morphology and in mediating either calcium or potassium/proton antiport. Mediates proton-dependent calcium efflux from mitochondrion. Also functions as an electroneutral mitochondrial proton/potassium exchanger. Crucial for the maintenance of mitochondrial tubular networks and for the assembly of the supercomplexes of the respiratory chain. Required for the maintenance of the tubular shape and cristae organization. This Homo sapiens (Human) protein is Mitochondrial proton/calcium exchanger protein.